The sequence spans 232 residues: Lipopolysaccharide core heptose(II) kinase WaaY (232 aa).

Belongs to the protein kinase superfamily. RfaY/WaaY family.

It catalyses the reaction alpha-D-Glc-(1-&gt;3)-[L-alpha-D-Hep-(1-&gt;7)]-L-alpha-D-Hep-(1-&gt;3)-4-O-PO3(2-)-L-alpha-D-Hep-(1-&gt;5)-[alpha-Kdo-(2-&gt;4)]-alpha-Kdo-(2-&gt;6)-lipid A + ATP = alpha-D-Glc-(1-&gt;3)-[L-alpha-D-Hep-(1-&gt;7)]-4-O-PO3(2-)-L-alpha-D-Hep-(1-&gt;3)-4-O-PO3(2-)-L-alpha-D-Hep-(1-&gt;5)-[alpha-Kdo-(2-&gt;4)]-alpha-Kdo-(2-&gt;6)-lipid A + ADP + H(+). It participates in bacterial outer membrane biogenesis; LPS core biosynthesis. Functionally, kinase involved in the biosynthesis of the core oligosaccharide region of lipopolysaccharide (LPS). Catalyzes the phosphorylation of the second heptose unit (HepII) of the inner core. The polypeptide is Lipopolysaccharide core heptose(II) kinase WaaY (Salmonella typhimurium (strain LT2 / SGSC1412 / ATCC 700720)).